The chain runs to 156 residues: Transcription antitermination protein NusB (156 aa).

Belongs to the NusB family.

Functionally, involved in transcription antitermination. Required for transcription of ribosomal RNA (rRNA) genes. Binds specifically to the boxA antiterminator sequence of the ribosomal RNA (rrn) operons. In Rickettsia felis (strain ATCC VR-1525 / URRWXCal2) (Rickettsia azadi), this protein is Transcription antitermination protein NusB.